Reading from the N-terminus, the 341-residue chain is Cyanuric acid amidohydrolase (341 aa).

Residues 1–90 (MAPIEILKFP…HVTFFLRSPG (90 aa)) are RU A. Substrate contacts are provided by residues arginine 51 and 71-72 (SG). Residues 95 to 229 (GLSAAVGHTR…CHILVLASTS (135 aa)) are RU B. Lysine 144 is an active-site residue. Residues arginine 176 and 212–213 (SS) contribute to the substrate site. Serine 212 acts as the Nucleophile in catalysis. Residues 235-341 (LHAVSRPMAD…SLCLVYETSI (107 aa)) form an RU C region. Mg(2+) is bound at residue glutamate 273. Substrate-binding positions include arginine 300 and 319-320 (SG). The Mg(2+) site is built by alanine 322, glutamine 325, glycine 326, proline 327, and glycine 330.

This sequence belongs to the cyclic amide hydrolase (CyAH) family. In terms of assembly, homotetramer.

It catalyses the reaction cyanurate + H2O = 1-carboxybiuret + H(+). It participates in xenobiotic degradation; atrazine degradation; biuret from cyanurate: step 1/1. With respect to regulation, inhibited by barbituric acid. Responsible for the hydrolysis of cyanuric acid, an intermediate formed during catabolism of s-triazine based compounds in herbicides such as atrazine and polymers such as melamine. Catalyzes the hydrolytic opening of the s-triazine ring of cyanuric acid (2,4,6-trihydroxy-s-triazine) to yield carbon dioxide and carboxybiuret, which spontaneously decarboxylates to biuret. Only active on cyanuric acid and N-methylisocyanuric acid. In Sarocladium sp, this protein is Cyanuric acid amidohydrolase.